The sequence spans 155 residues: 6,7-dimethyl-8-ribityllumazine synthase (155 aa).

Residues phenylalanine 24, 58–60 (AFE), and 82–84 (VII) contribute to the 5-amino-6-(D-ribitylamino)uracil site. 87 to 88 (ST) contacts (2S)-2-hydroxy-3-oxobutyl phosphate. Residue histidine 90 is the Proton donor of the active site. Phenylalanine 115 contributes to the 5-amino-6-(D-ribitylamino)uracil binding site. Arginine 129 contributes to the (2S)-2-hydroxy-3-oxobutyl phosphate binding site.

Belongs to the DMRL synthase family.

The enzyme catalyses (2S)-2-hydroxy-3-oxobutyl phosphate + 5-amino-6-(D-ribitylamino)uracil = 6,7-dimethyl-8-(1-D-ribityl)lumazine + phosphate + 2 H2O + H(+). The protein operates within cofactor biosynthesis; riboflavin biosynthesis; riboflavin from 2-hydroxy-3-oxobutyl phosphate and 5-amino-6-(D-ribitylamino)uracil: step 1/2. Catalyzes the formation of 6,7-dimethyl-8-ribityllumazine by condensation of 5-amino-6-(D-ribitylamino)uracil with 3,4-dihydroxy-2-butanone 4-phosphate. This is the penultimate step in the biosynthesis of riboflavin. The polypeptide is 6,7-dimethyl-8-ribityllumazine synthase (Chlorobium phaeobacteroides (strain DSM 266 / SMG 266 / 2430)).